A 184-amino-acid chain; its full sequence is HVA22-like protein c (184 aa).

3 helical membrane-spanning segments follow: residues 13–33, 51–71, and 73–93; these read VLIKNFDVLALPLVTLVYPLY, LTYWVLYALISLFELTFSKPL, and WFPIWPYMKLFGICWLVLPQF.

Belongs to the DP1 family. In terms of tissue distribution, predominantly expressed in flower buds and stem.

The protein localises to the membrane. The sequence is that of HVA22-like protein c (HVA22C) from Arabidopsis thaliana (Mouse-ear cress).